We begin with the raw amino-acid sequence, 454 residues long: Bifunctional protein GlmU (454 aa).

Residues Met-1 to Arg-227 form a pyrophosphorylase region. UDP-N-acetyl-alpha-D-glucosamine-binding positions include Leu-9–Gly-12, Lys-23, Gln-74, Gly-79–Thr-80, Tyr-101–Asp-103, Gly-138, Glu-152, Asn-167, and Asn-225. Mg(2+) is bound at residue Asp-103. Asn-225 provides a ligand contact to Mg(2+). The linker stretch occupies residues Leu-228–Glu-248. The segment at Gly-249–Lys-454 is N-acetyltransferase. UDP-N-acetyl-alpha-D-glucosamine-binding residues include Arg-331 and Lys-349. His-361 functions as the Proton acceptor in the catalytic mechanism. The UDP-N-acetyl-alpha-D-glucosamine site is built by Tyr-364 and Asn-375. Acetyl-CoA-binding positions include Ala-378, Asn-384–Tyr-385, Ser-403, Ala-421, and Arg-438.

The protein in the N-terminal section; belongs to the N-acetylglucosamine-1-phosphate uridyltransferase family. This sequence in the C-terminal section; belongs to the transferase hexapeptide repeat family. As to quaternary structure, homotrimer. Mg(2+) is required as a cofactor.

The protein localises to the cytoplasm. The enzyme catalyses alpha-D-glucosamine 1-phosphate + acetyl-CoA = N-acetyl-alpha-D-glucosamine 1-phosphate + CoA + H(+). The catalysed reaction is N-acetyl-alpha-D-glucosamine 1-phosphate + UTP + H(+) = UDP-N-acetyl-alpha-D-glucosamine + diphosphate. It functions in the pathway nucleotide-sugar biosynthesis; UDP-N-acetyl-alpha-D-glucosamine biosynthesis; N-acetyl-alpha-D-glucosamine 1-phosphate from alpha-D-glucosamine 6-phosphate (route II): step 2/2. Its pathway is nucleotide-sugar biosynthesis; UDP-N-acetyl-alpha-D-glucosamine biosynthesis; UDP-N-acetyl-alpha-D-glucosamine from N-acetyl-alpha-D-glucosamine 1-phosphate: step 1/1. It participates in bacterial outer membrane biogenesis; LPS lipid A biosynthesis. Its function is as follows. Catalyzes the last two sequential reactions in the de novo biosynthetic pathway for UDP-N-acetylglucosamine (UDP-GlcNAc). The C-terminal domain catalyzes the transfer of acetyl group from acetyl coenzyme A to glucosamine-1-phosphate (GlcN-1-P) to produce N-acetylglucosamine-1-phosphate (GlcNAc-1-P), which is converted into UDP-GlcNAc by the transfer of uridine 5-monophosphate (from uridine 5-triphosphate), a reaction catalyzed by the N-terminal domain. This chain is Bifunctional protein GlmU, found in Mannheimia succiniciproducens (strain KCTC 0769BP / MBEL55E).